The following is a 163-amino-acid chain: Regulatory protein RecX (163 aa).

A disordered region spans residues 1-21; sequence MSDAEDIPTGRKRRPREQTPV.

It belongs to the RecX family.

The protein resides in the cytoplasm. Its function is as follows. Modulates RecA activity. This chain is Regulatory protein RecX, found in Stenotrophomonas maltophilia (strain R551-3).